The sequence spans 408 residues: Multidrug resistance protein MdtG (408 aa).

11 consecutive transmembrane segments (helical) span residues Leu16–Phe36, Ile58–Ala78, Leu92–Ile112, Ala115–Val135, Thr146–Ala166, Pro173–Ile193, Leu224–Leu244, Val256–Pro276, Ile290–Thr310, Phe319–Asn339, and Ala378–Leu398.

The protein belongs to the major facilitator superfamily. DHA1 family. MdtG (TC 2.A.1.2.20) subfamily.

It localises to the cell inner membrane. Functionally, confers resistance to fosfomycin and deoxycholate. The protein is Multidrug resistance protein MdtG of Escherichia coli O139:H28 (strain E24377A / ETEC).